The primary structure comprises 335 residues: Nucleoid-associated protein YejK (335 aa).

Belongs to the YejK family.

The protein localises to the cytoplasm. The protein resides in the nucleoid. In Shigella sonnei (strain Ss046), this protein is Nucleoid-associated protein YejK.